Consider the following 759-residue polypeptide: Cullin-4A (759 aa).

Lys8 is covalently cross-linked (Glycyl lysine isopeptide (Lys-Gly) (interchain with G-Cter in SUMO2)). The residue at position 10 (Ser10) is a Phosphoserine. Residue Lys33 forms a Glycyl lysine isopeptide (Lys-Gly) (interchain with G-Cter in ubiquitin) linkage. A Cullin neddylation domain is found at 691–751; that stretch reads DRQYQIDAAI…RDYMERDKDN (61 aa). Lys705 participates in a covalent cross-link: Glycyl lysine isopeptide (Lys-Gly) (interchain with G-Cter in NEDD8).

It belongs to the cullin family. In terms of assembly, can self-associate. Component of multiple DCX (DDB1-CUL4-X-box) E3 ubiquitin-protein ligase complexes that seem to consist of DDB1, CUL4A or CUL4B, RBX1 and a variable substrate recognition component which seems to belong to a protein family described as DCAF (Ddb1- and Cul4-associated factor) or CDW (CUL4-DDB1-associated WD40-repeat) proteins. Component of the CSA complex (DCX(ERCC8) complex) containing ERCC8, RBX1, DDB1 and CUL4A; the CSA complex interacts with RNA polymerase II; upon UV irradiation it interacts with the COP9 signalosome and preferentially with the hyperphosphorylated form of RNA polymerase II. Component of the DCX(DET1-COP1) complex with the substrate recognition component DET1 and COP1. Component of the DCX(DDB2) complex with the substrate recognition component DDB2. Component of the DCX(DTL) complex with the putative substrate recognition component DTL. Component of DCX complexes part of the DesCEND (destruction via C-end degrons) pathway, which contain either TRPC4AP or DCAF12 as substrate-recognition component. Component of the DCX(AMBRA1) complex with the substrate recognition component AMBRA1. Interacts with DDB1, RBX1, RNF7, CDT1, TIP120A/CAND1, SKP2, CDKN1B, MDM2, TP53 and HOXA9. Interacts with DDB2; the interactions with DDB2 and CAND1 are mutually exclusive. Interacts with DCAF1, DTL, DDA1, DCAF6, DCAF4, DCAF16, DCAF17, DET1, WDTC1, DCAF5, DCAF11, WDR24A, COP1, PAFAH1B1, ERCC8, GRWD1, FBXW5, RBBP7, GNB2, WSB1, WSB2, NUP43, PWP1, FBXW8, ATG16L1, KATNB1, RBBP4, RBBP5, LRWD1 and DCAF8. May interact with WDR26, WDR51B, SNRNP40, WDR61, WDR76, WDR5. Interacts (when neddylated) with ARIH1; leading to activate the E3 ligase activity of ARIH1. The DDB1-CUL4A complex interacts with CRY1. Interacts (unneddylated form) with DCUN1D1, DCUN1D2, DCUN1D3, DCUN1D4 and DCUN1D5; these interactions promote the cullin neddylation. (Microbial infection) Interacts with Epstein-Barr virus BPLF1. In terms of processing, neddylated; required for activity of cullin-RING-based E3 ubiquitin-protein ligase complexes. Deneddylated via its interaction with the COP9 signalosome (CSN) complex. Post-translationally, (Microbial infection) Deneddylated by Epstein-Barr virus BPLF1 leading to a S-phase-like environment that is required for efficient replication of the viral genome.

The protein operates within protein modification; protein ubiquitination. Its function is as follows. Core component of multiple cullin-RING-based E3 ubiquitin-protein ligase complexes which mediate the ubiquitination of target proteins. As a scaffold protein may contribute to catalysis through positioning of the substrate and the ubiquitin-conjugating enzyme. The E3 ubiquitin-protein ligase activity of the complex is dependent on the neddylation of the cullin subunit and is inhibited by the association of the deneddylated cullin subunit with TIP120A/CAND1. The functional specificity of the E3 ubiquitin-protein ligase complex depends on the variable substrate recognition component. DCX(DET1-COP1) directs ubiquitination of JUN. DCX(DDB2) directs ubiquitination of XPC. DCX(DDB2) ubiquitinates histones H3-H4 and is required for efficient histone deposition during replication-coupled (H3.1) and replication-independent (H3.3) nucleosome assembly, probably by facilitating the transfer of H3 from ASF1A/ASF1B to other chaperones involved in histone deposition. DCX(DTL) plays a role in PCNA-dependent polyubiquitination of CDT1 and MDM2-dependent ubiquitination of p53/TP53 in response to radiation-induced DNA damage and during DNA replication. DCX(DTL) directs autoubiquitination of DTL. In association with DDB1 and SKP2 probably is involved in ubiquitination of CDKN1B/p27kip. Is involved in ubiquitination of HOXA9. The DDB1-CUL4A-DTL E3 ligase complex regulates the circadian clock function by mediating the ubiquitination and degradation of CRY1. The DCX(ERCC8) complex (also named CSA complex) plays a role in transcription-coupled repair (TCR). A number of DCX complexes (containing either TRPC4AP or DCAF12 as substrate-recognition component) are part of the DesCEND (destruction via C-end degrons) pathway, which recognizes a C-degron located at the extreme C terminus of target proteins, leading to their ubiquitination and degradation. The DCX(AMBRA1) complex is a master regulator of the transition from G1 to S cell phase by mediating ubiquitination of phosphorylated cyclin-D (CCND1, CCND2 and CCND3). The DCX(AMBRA1) complex also acts as a regulator of Cul5-RING (CRL5) E3 ubiquitin-protein ligase complexes by mediating ubiquitination and degradation of Elongin-C (ELOC) component of CRL5 complexes. With CUL4B, contributes to ribosome biogenesis. The sequence is that of Cullin-4A from Homo sapiens (Human).